Reading from the N-terminus, the 469-residue chain is Mannosyl-oligosaccharide 1,2-alpha-mannosidase IA (469 aa).

Residues 1 to 469 (REPADAAVRE…DQKEVEVKVK (469 aa)) are Lumenal-facing. An intrachain disulfide couples C292 to C324. N329 is a glycosylation site (N-linked (GlcNAc...) asparagine). The active-site Proton donor is the E338. T449 serves as a coordination point for Ca(2+).

Belongs to the glycosyl hydrolase 47 family. Ca(2+) serves as cofactor.

The protein localises to the golgi apparatus membrane. It carries out the reaction N(4)-(alpha-D-Man-(1-&gt;2)-alpha-D-Man-(1-&gt;2)-alpha-D-Man-(1-&gt;3)-[alpha-D-Man-(1-&gt;2)-alpha-D-Man-(1-&gt;3)-[alpha-D-Man-(1-&gt;2)-alpha-D-Man-(1-&gt;6)]-alpha-D-Man-(1-&gt;6)]-beta-D-Man-(1-&gt;4)-beta-D-GlcNAc-(1-&gt;4)-beta-D-GlcNAc)-L-asparaginyl-[protein] (N-glucan mannose isomer 9A1,2,3B1,2,3) + 4 H2O = N(4)-(alpha-D-Man-(1-&gt;3)-[alpha-D-Man-(1-&gt;3)-[alpha-D-Man-(1-&gt;6)]-alpha-D-Man-(1-&gt;6)]-beta-D-Man-(1-&gt;4)-beta-D-GlcNAc-(1-&gt;4)-beta-D-GlcNAc)-L-asparaginyl-[protein] (N-glucan mannose isomer 5A1,2) + 4 beta-D-mannose. The catalysed reaction is N(4)-(alpha-D-Man-(1-&gt;2)-alpha-D-Man-(1-&gt;2)-alpha-D-Man-(1-&gt;3)-[alpha-D-Man-(1-&gt;3)-[alpha-D-Man-(1-&gt;2)-alpha-D-Man-(1-&gt;6)]-alpha-D-Man-(1-&gt;6)]-beta-D-Man-(1-&gt;4)-beta-D-GlcNAc-(1-&gt;4)-beta-D-GlcNAc)-L-asparaginyl-[protein] (N-glucan mannose isomer 8A1,2,3B1,3) + 3 H2O = N(4)-(alpha-D-Man-(1-&gt;3)-[alpha-D-Man-(1-&gt;3)-[alpha-D-Man-(1-&gt;6)]-alpha-D-Man-(1-&gt;6)]-beta-D-Man-(1-&gt;4)-beta-D-GlcNAc-(1-&gt;4)-beta-D-GlcNAc)-L-asparaginyl-[protein] (N-glucan mannose isomer 5A1,2) + 3 beta-D-mannose. It participates in protein modification; protein glycosylation. With respect to regulation, inhibited by both 1-deoxymannojirimycin and kifunensine. Its function is as follows. Involved in the maturation of Asn-linked oligosaccharides. Progressively trim alpha-1,2-linked mannose residues from Man(9)GlcNAc(2) to produce Man(5)GlcNAc(2). The sequence is that of Mannosyl-oligosaccharide 1,2-alpha-mannosidase IA (MAN1A1) from Oryctolagus cuniculus (Rabbit).